Consider the following 433-residue polypeptide: Glutamate-1-semialdehyde 2,1-aminomutase (433 aa).

Lys270 carries the N6-(pyridoxal phosphate)lysine modification.

It belongs to the class-III pyridoxal-phosphate-dependent aminotransferase family. HemL subfamily. As to quaternary structure, homodimer. It depends on pyridoxal 5'-phosphate as a cofactor.

Its subcellular location is the cytoplasm. It catalyses the reaction (S)-4-amino-5-oxopentanoate = 5-aminolevulinate. Its pathway is porphyrin-containing compound metabolism; protoporphyrin-IX biosynthesis; 5-aminolevulinate from L-glutamyl-tRNA(Glu): step 2/2. The chain is Glutamate-1-semialdehyde 2,1-aminomutase from Clostridium novyi (strain NT).